The following is a 287-amino-acid chain: RNA polymerase sigma factor RpoH (287 aa).

The segment at 54–123 is sigma-70 factor domain-2; it reads LILSHLRFVI…IHEYVLRNWR (70 aa). Residues 78–81 carry the Interaction with polymerase core subunit RpoC motif; the sequence is DLIQ. A sigma-70 factor domain-4 region spans residues 230 to 283; it reads ALSSLDERSRNIIHARWLDDSDHKMTLREIAHNYGISAERVRQLEKNAMKKLKV. Positions 256 to 275 form a DNA-binding region, H-T-H motif; that stretch reads LREIAHNYGISAERVRQLEK.

The protein belongs to the sigma-70 factor family. RpoH subfamily. Interacts with the RNA polymerase core enzyme.

The protein resides in the cytoplasm. Functionally, sigma factors are initiation factors that promote the attachment of RNA polymerase to specific initiation sites and are then released. This sigma factor is involved in regulation of expression of heat shock genes. The chain is RNA polymerase sigma factor RpoH from Buchnera aphidicola subsp. Baizongia pistaciae (strain Bp).